Consider the following 127-residue polypeptide: MRDIQMVLERWGAWAANNHEDVTWSSIAAGFKGLITSKVKSRPQCCDDDAMIICGCMARLKKNNSDLHDLLVDYYVVGMTFMSLAGKHCCSDGYIGKRLQKAEGIIEGMLMALDIRLEMDIVVNNSN.

It belongs to the phage antitermination Q type 1 family.

In terms of biological role, positively regulate expression of some phage genes. Bacterial host RNA polymerase modified by antitermination proteins transcribes through termination sites that otherwise prevent expression of the regulated genes. The sequence is that of Prophage antitermination protein Q homolog QuuD (quuD) from Escherichia coli (strain K12).